A 234-amino-acid polypeptide reads, in one-letter code: ATP synthase subunit a 2 (234 aa).

6 helical membrane passes run 29–49 (FFQH…VGLL), 90–110 (LIAT…IPGF), 116–136 (SLNT…IVGV), 147–167 (FMGP…IGHL), 186–206 (IVLM…MMLM), and 207–227 (GILV…IYIA).

This sequence belongs to the ATPase A chain family. As to quaternary structure, F-type ATPases have 2 components, CF(1) - the catalytic core - and CF(0) - the membrane proton channel. CF(1) has five subunits: alpha(3), beta(3), gamma(1), delta(1), epsilon(1). CF(0) has three main subunits: a(1), b(2) and c(9-12). The alpha and beta chains form an alternating ring which encloses part of the gamma chain. CF(1) is attached to CF(0) by a central stalk formed by the gamma and epsilon chains, while a peripheral stalk is formed by the delta and b chains.

The protein localises to the cell inner membrane. Functionally, key component of the proton channel; it plays a direct role in the translocation of protons across the membrane. This chain is ATP synthase subunit a 2, found in Syntrophotalea carbinolica (strain DSM 2380 / NBRC 103641 / GraBd1) (Pelobacter carbinolicus).